Here is a 166-residue protein sequence, read N- to C-terminus: Large ribosomal subunit protein uL10 (166 aa).

This sequence belongs to the universal ribosomal protein uL10 family. In terms of assembly, part of the ribosomal stalk of the 50S ribosomal subunit. The N-terminus interacts with L11 and the large rRNA to form the base of the stalk. The C-terminus forms an elongated spine to which L12 dimers bind in a sequential fashion forming a multimeric L10(L12)X complex.

In terms of biological role, forms part of the ribosomal stalk, playing a central role in the interaction of the ribosome with GTP-bound translation factors. This Oceanobacillus iheyensis (strain DSM 14371 / CIP 107618 / JCM 11309 / KCTC 3954 / HTE831) protein is Large ribosomal subunit protein uL10.